The following is an 891-amino-acid chain: Protein translocase subunit SecA (891 aa).

Residues Q83, 101–105 (GEGKT), and D489 contribute to the ATP site.

It belongs to the SecA family.

The protein localises to the plastid. It is found in the chloroplast stroma. The protein resides in the chloroplast thylakoid membrane. It catalyses the reaction ATP + H2O + cellular proteinSide 1 = ADP + phosphate + cellular proteinSide 2.. In terms of biological role, has a central role in coupling the hydrolysis of ATP to the transfer of proteins across the thylakoid membrane. The chain is Protein translocase subunit SecA from Diacronema lutheri (Unicellular marine alga).